The following is a 294-amino-acid chain: Sarcotoxin II-2 (294 aa).

A signal peptide spans 1-22 (MKSFVFFAACFAIVALNSLAHA). Positions 23 to 24 (YP) are cleaved as a propeptide — removed by a dipeptidylpeptidase. Pyrrolidone carboxylic acid is present on Gln25. Arginine amide is present on Arg293.

Belongs to the attacin/sarcotoxin-2 family. In terms of tissue distribution, synthesized by the fat body and is eventually secreted into the hemolymph.

Its subcellular location is the secreted. In terms of biological role, sarcotoxin II is an antibacterial protein which plays a role in the inflammatory response of this insect. The main effect of sarcotoxin II on E.coli may be the inhibition of cell wall synthesis, including septum formation. The polypeptide is Sarcotoxin II-2 (Sarcophaga peregrina (Flesh fly)).